Consider the following 653-residue polypeptide: Multidomain regulatory protein Rv1364c (653 aa).

Phosphothreonine; by PknD is present on residues T54 and T81. Positions 86–142 constitute a PAC domain; the sequence is SGSEWRLQTDYDGSGVEERYFDFVVTPRRRADGSIEGVQLIVDDVTSRVRARQAAEA. Residues 177 to 396 form the PPM-type phosphatase domain; sequence DIAAEYLVAA…DDVTLLAMQR (220 aa). Positions 211 and 212 each coordinate Mn(2+). T299 is subject to Phosphothreonine; by PknD. Mn(2+)-binding residues include D328 and D387. Residue T390 is modified to Phosphothreonine; by PknD. Positions 397-544 are anti-sigma factor kinase region; the sequence is RAPTPPLHIT…TMVRRAAFQQ (148 aa). The residue at position 506 (S506) is a Phosphoserine; by PknD. Phosphothreonine; by PknD occurs at positions 520 and 568. One can recognise an STAS domain in the interval 546–653; it reads IDSEFVSLVE…ADTEDIFAQE (108 aa). Phosphoserine; by autocatalysis is present on S600.

As to quaternary structure, exists in solution as both monomer and dimer. Both the phosphorylated and unphosphorylated proteins form extended dimers. Interacts with SigF. Can efficiently bind to SigF independently of its autophosphorylation. Interaction between SigF and Rv1364c is reduced significantly upon the phosphorylation of both proteins by PknD. The cofactor is Mn(2+). Requires Mg(2+) as cofactor. Post-translationally, autophosphorylated. Phosphorylated by PknD on multiple threonine and serine residues. Phosphorylation is antagonized by the phosphatase activity.

It catalyses the reaction O-phospho-L-seryl-[protein] + H2O = L-seryl-[protein] + phosphate. It carries out the reaction O-phospho-L-threonyl-[protein] + H2O = L-threonyl-[protein] + phosphate. The catalysed reaction is L-seryl-[protein] + ATP = O-phospho-L-seryl-[protein] + ADP + H(+). The enzyme catalyses L-threonyl-[protein] + ATP = O-phospho-L-threonyl-[protein] + ADP + H(+). Its activity is regulated as follows. The phosphatase domain is activated by the anti-sigma factor kinase domain. Primarily acts as an independent SigF regulator that is sensitive to the osmosensory signal, mediating the cross talk of PknD with the SigF regulon. Possesses both phosphatase and kinase activities. The kinase domain functions as a classic anti-sigma factor-like kinase to phosphorylate the anti-anti-sigma factor domain at the canonical regulatory site, and the phosphatase domain antagonizes this activity. The protein is Multidomain regulatory protein Rv1364c of Mycobacterium tuberculosis (strain ATCC 25618 / H37Rv).